The chain runs to 767 residues: Two-component response regulator-like PRR73 (767 aa).

The disordered stretch occupies residues 1-64; that stretch reads MGSACEAGTD…EPQQTDEQKE (64 aa). A Response regulatory domain is found at 82-200; sequence RVLLVENDDS…ELKNLWQHVW (119 aa). The span at 205–214 shows a compositional bias: low complexity; that stretch reads SSSGSGSESG. Disordered regions lie at residues 205 to 272, 312 to 388, 476 to 546, 646 to 701, and 727 to 767; these read SSSG…QSSW, RWLP…NEPT, ASNQ…RGKV, ANYS…SGSG, and NFGK…DEDR. The span at 238-252 shows a compositional bias: acidic residues; the sequence is DNEDDDDNDEDDDDL. Composition is skewed to polar residues over residues 263–272, 343–361, and 488–497; these read DNGSGTQSSW, RNSSMEYQSSPREMSVNPT, and CSPQDNSSEA. Residues 518 to 531 are compositionally biased toward low complexity; the sequence is GSNGSSNNNDMGSS. The segment covering 532–543 has biased composition (polar residues); the sequence is TKNAITKPSSNR. A compositionally biased stretch (gly residues) spans 689-700; the sequence is GAGGGNGSGSGS. Residues 712-754 form the CCT domain; the sequence is REAALNKFRQKRKVRNFGKKVRYQSRKRLAEQRPRIRGQFVRQ. The span at 727 to 738 shows a compositional bias: basic residues; that stretch reads NFGKKVRYQSRK.

It belongs to the ARR-like family.

It localises to the nucleus. Functionally, controls photoperiodic flowering response. Seems to be one of the component of the circadian clock. Expression of several members of the ARR-like family is controlled by circadian rhythm. The particular coordinated sequential expression of PRR73, PRR37, PRR95, PRR59 and PPR1 result to circadian waves that may be at the basis of the endogenous circadian clock. This Oryza sativa subsp. indica (Rice) protein is Two-component response regulator-like PRR73 (PRR73).